The chain runs to 36 residues: uncharacterized protein (36 aa).

The segment covering 1-14 (MNQLGSGPTKQGVA) has biased composition (polar residues). The disordered stretch occupies residues 1-36 (MNQLGSGPTKQGVATNTGSTGTTKNNSNLSGKGWVL). A compositionally biased stretch (low complexity) spans 15–36 (TNTGSTGTTKNNSNLSGKGWVL).

This is an uncharacterized protein from Dictyostelium discoideum (Social amoeba).